A 408-amino-acid polypeptide reads, in one-letter code: MDKLLERFLHYVSLDTQSKAGVRQVPSTEGQWKLLHLLKQQLEEMGLVNVTLSDKGTVMVTLPANVAGDIPAIGFISHVDTSPDFSGKNVNPQIVENYRGGDIALGIGDEVLSPVMFPVLHQLLGQTLITTDGKTLLGADDKAGVAEIMTALAVLKQKDIPHGDIRVAFTPDEEVGKGAKHFDVEAFGAQWAYTVDGGGVGELEFENFNAASVNIKIVGNNVHPGTAKGVMVNALSLAARIHAEVPADESPETTEGYEGFYHLASMKGTVDRADMHYIIRDFDRKQFEARKRKMMEIAKKVGKGLHPDCYIELVIEDSYYNMREKVVEHPHILDIAQQAMRDCDIVPDMKPIRGGTDGAQLSFMGLPCPNLFTGGYNYHGKHEFVTLEGMEKAVQVIVRIAELTAKQQ.

Histidine 78 provides a ligand contact to Zn(2+). Residue aspartate 80 is part of the active site. Aspartate 140 contributes to the Zn(2+) binding site. Residue glutamate 173 is the Proton acceptor of the active site. 3 residues coordinate Zn(2+): glutamate 174, aspartate 196, and histidine 379.

This sequence belongs to the peptidase M20B family. Zn(2+) is required as a cofactor.

It localises to the cytoplasm. The enzyme catalyses Release of the N-terminal residue from a tripeptide.. Cleaves the N-terminal amino acid of tripeptides. This Citrobacter koseri (strain ATCC BAA-895 / CDC 4225-83 / SGSC4696) protein is Peptidase T.